Consider the following 257-residue polypeptide: Global transcriptional regulator CodY (257 aa).

The tract at residues 1–155 (MSLLSKTREL…AATVIGMEIL (155 aa)) is GAF domain. A DNA-binding region (H-T-H motif) is located at residues 203–222 (ASKVADRVGITRSVIVNALR).

This sequence belongs to the CodY family.

The protein resides in the cytoplasm. In terms of biological role, DNA-binding global transcriptional regulator which is involved in the adaptive response to starvation and acts by directly or indirectly controlling the expression of numerous genes in response to nutrient availability. During rapid exponential growth, CodY is highly active and represses genes whose products allow adaptation to nutrient depletion. This chain is Global transcriptional regulator CodY, found in Staphylococcus epidermidis (strain ATCC 12228 / FDA PCI 1200).